We begin with the raw amino-acid sequence, 318 residues long: Fibronectin type III domain-containing protein 11 (318 aa).

The Fibronectin type-III domain occupies 210–307; that stretch reads VVFDRKASAA…DSLTLHTKPE (98 aa).

This chain is Fibronectin type III domain-containing protein 11 (FNDC11), found in Homo sapiens (Human).